The chain runs to 148 residues: Cuticle protein 8 (148 aa).

5 tandem repeats follow at residues 16–19 (AAPA), alanine 22, 28–31 (AAPV), 37–40 (AAPA), and 44–47 (AAPV). The 71-residue stretch at 58-128 (YPKYEFNYGV…RTPGTHPVAV (71 aa)) folds into the Chitin-binding type R&amp;R domain.

Component of the cuticle of migratory locust which contains more than 100 different structural proteins. The chain is Cuticle protein 8 from Locusta migratoria (Migratory locust).